The chain runs to 149 residues: Ribosome maturation factor RimP (149 aa).

The protein belongs to the RimP family.

The protein resides in the cytoplasm. Its function is as follows. Required for maturation of 30S ribosomal subunits. The polypeptide is Ribosome maturation factor RimP (Neisseria meningitidis serogroup A / serotype 4A (strain DSM 15465 / Z2491)).